A 528-amino-acid chain; its full sequence is Sphingosine-1-phosphate lyase (528 aa).

The helical transmembrane segment at Pro-13 to Thr-35 threads the bilayer. Lys-324 bears the N6-(pyridoxal phosphate)lysine mark.

Belongs to the group II decarboxylase family. Sphingosine-1-phosphate lyase subfamily. Requires pyridoxal 5'-phosphate as cofactor.

The protein resides in the endoplasmic reticulum membrane. The enzyme catalyses sphinganine 1-phosphate = hexadecanal + phosphoethanolamine. It functions in the pathway lipid metabolism; sphingolipid metabolism. Cleaves phosphorylated sphingoid bases (PSBs), such as sphingosine-1-phosphate, into fatty aldehydes and phosphoethanolamine. Sphingosine-1-phosphate (S1P) probably acts intracellularly as a second messenger perhaps by promoting cell proliferation; the absence of S1P lyase increases its concentration. This leads to increased lateral pseudopod formation as well as defects in the efficiency of chemotaxis. Overexpression of S1P lyase causes decreased growth rates, entry into stationary phase at lower cell density and increased sensitivity to the antitumor agents cisplatin and carboplatin; these effects are more pronounced in cells that express more enzyme. This Dictyostelium discoideum (Social amoeba) protein is Sphingosine-1-phosphate lyase (sglA).